The following is a 266-amino-acid chain: 4-hydroxy-tetrahydrodipicolinate reductase (266 aa).

NAD(+) is bound at residue 10–15 (GPRGRM). Lys-38 lines the NADP(+) pocket. Residues 99-101 (GTT) and 125-128 (APNF) contribute to the NAD(+) site. His-155 acts as the Proton donor/acceptor in catalysis. A (S)-2,3,4,5-tetrahydrodipicolinate-binding site is contributed by His-156. Residue Lys-159 is the Proton donor of the active site. 165-166 (GT) is a (S)-2,3,4,5-tetrahydrodipicolinate binding site.

This sequence belongs to the DapB family.

It is found in the cytoplasm. It carries out the reaction (S)-2,3,4,5-tetrahydrodipicolinate + NAD(+) + H2O = (2S,4S)-4-hydroxy-2,3,4,5-tetrahydrodipicolinate + NADH + H(+). The enzyme catalyses (S)-2,3,4,5-tetrahydrodipicolinate + NADP(+) + H2O = (2S,4S)-4-hydroxy-2,3,4,5-tetrahydrodipicolinate + NADPH + H(+). The protein operates within amino-acid biosynthesis; L-lysine biosynthesis via DAP pathway; (S)-tetrahydrodipicolinate from L-aspartate: step 4/4. In terms of biological role, catalyzes the conversion of 4-hydroxy-tetrahydrodipicolinate (HTPA) to tetrahydrodipicolinate. The protein is 4-hydroxy-tetrahydrodipicolinate reductase of Bacillus cereus (strain ATCC 14579 / DSM 31 / CCUG 7414 / JCM 2152 / NBRC 15305 / NCIMB 9373 / NCTC 2599 / NRRL B-3711).